Here is a 92-residue protein sequence, read N- to C-terminus: Elongation factor 1-beta (92 aa).

The protein belongs to the EF-1-beta/EF-1-delta family.

Promotes the exchange of GDP for GTP in EF-1-alpha/GDP, thus allowing the regeneration of EF-1-alpha/GTP that could then be used to form the ternary complex EF-1-alpha/GTP/AAtRNA. The chain is Elongation factor 1-beta from Pyrobaculum arsenaticum (strain DSM 13514 / JCM 11321 / PZ6).